The primary structure comprises 455 residues: Xylan O-acetyltransferase 3 (455 aa).

Over residues 1-15 the composition is skewed to low complexity; sequence MSKPQQQSPPSTTTT. The tract at residues 1-32 is disordered; that stretch reads MSKPQQQSPPSTTTTSPPPPPPSTPPPASSSR. At 1–42 the chain is on the cytoplasmic side; that stretch reads MSKPQQQSPPSTTTTSPPPPPPSTPPPASSSRSLLSALRRSP. Over residues 16–28 the composition is skewed to pro residues; it reads SPPPPPPSTPPPA. A helical; Signal-anchor for type II membrane protein transmembrane segment spans residues 43-59; the sequence is VTTLVAAFFLLALFMYG. At 60-455 the chain is on the lumenal side; the sequence is EDVRTLAELS…PSTHPSLPPQ (396 aa). N-linked (GlcNAc...) asparagine glycosylation is found at N82, N107, and N146. Cystine bridges form between C96-C147, C118-C183, C127-C423, and C339-C419. The GDS motif motif lies at 170-172; the sequence is GDS. S172 (nucleophile) is an active-site residue. N-linked (GlcNAc...) asparagine glycans are attached at residues N278 and N348. The active-site Proton donor is D418. A DXXH motif motif is present at residues 418–421; it reads DCIH. The Proton acceptor role is filled by H421.

This sequence belongs to the PC-esterase family. TBL subfamily. As to expression, highly expressed in leaves. Expressed in roots, stems and inflorescences.

Its subcellular location is the golgi apparatus membrane. Its function is as follows. Xylan acetyltransferase required for 2-O- and 3-O-monoacetylation of xylosyl residues in xylan. Catalyzes the 2-O-acetylation of xylan, followed by nonenzymatic acetyl migration to the O-3 position, resulting in products that are monoacetylated at both O-2 and O-3 positions. The polypeptide is Xylan O-acetyltransferase 3 (Oryza sativa subsp. japonica (Rice)).